Reading from the N-terminus, the 330-residue chain is Urokinase plasminogen activator surface receptor (330 aa).

The signal sequence occupies residues 1 to 20; that stretch reads MGQPLLLLLLVYTYIPGSWG. UPAR/Ly6 domains are found at residues 21–112, 113–208, and 209–300; these read LRCL…RNRY, LECA…PPNG, and LQCY…PGKG. Disulfide bonds link cysteine 23/cysteine 44, cysteine 26/cysteine 32, and cysteine 37/cysteine 65. Asparagine 28 is a glycosylation site (N-linked (GlcNAc...) asparagine). Asparagine 72 is a glycosylation site (N-linked (GlcNAc...) asparagine). Cystine bridges form between cysteine 91–cysteine 96, cysteine 115–cysteine 142, cysteine 118–cysteine 125, cysteine 135–cysteine 164, cysteine 170–cysteine 187, cysteine 188–cysteine 193, cysteine 211–cysteine 239, cysteine 214–cysteine 222, cysteine 232–cysteine 258, cysteine 264–cysteine 282, and cysteine 283–cysteine 288. Asparagine 179 and asparagine 189 each carry an N-linked (GlcNAc...) asparagine glycan. N-linked (GlcNAc...) asparagine glycosylation occurs at asparagine 279. Glycine 300 is lipidated: GPI-anchor amidated glycine. Positions 301-330 are cleaved as a propeptide — removed in mature form; sequence GAPKTSPAHLSFFVSLLLTARLWGATLLCT.

As to quaternary structure, monomer. Interacts (via the UPAR/Ly6 domains) with SRPX2. Interacts with MRC2. Interacts with SORL1 (via N-terminal ectodomain); this interaction decreases PLAUR internalization. The ternary complex composed of PLAUR-PLAU-SERPINE1 also interacts with SORL1. Interacts with CD82; this interaction prevents PLAUR from binding to its high affinity ligand PLAU.

It is found in the cell membrane. Functionally, acts as a receptor for urokinase plasminogen activator. Plays a role in localizing and promoting plasmin formation. Mediates the proteolysis-independent signal transduction activation effects of U-PA. This Bos taurus (Bovine) protein is Urokinase plasminogen activator surface receptor (PLAUR).